Reading from the N-terminus, the 644-residue chain is Exoribonuclease 2 (644 aa).

Residues 189 to 516 form the RNB domain; it reads RKDLTALDFV…NHRLLKAVIK (328 aa). An S1 motif domain is found at 561-643; that stretch reads DTRFAAEIVD…ETRSIIARPV (83 aa).

This sequence belongs to the RNR ribonuclease family. RNase II subfamily.

The protein localises to the cytoplasm. The catalysed reaction is Exonucleolytic cleavage in the 3'- to 5'-direction to yield nucleoside 5'-phosphates.. Involved in mRNA degradation. Hydrolyzes single-stranded polyribonucleotides processively in the 3' to 5' direction. This Escherichia coli O157:H7 protein is Exoribonuclease 2.